The following is a 238-amino-acid chain: Hydroxyacylglutathione hydrolase (238 aa).

Zn(2+)-binding residues include His52, His54, Asp56, His57, His108, Asp125, and His163.

The protein belongs to the metallo-beta-lactamase superfamily. Glyoxalase II family. Monomer. Zn(2+) serves as cofactor.

It catalyses the reaction an S-(2-hydroxyacyl)glutathione + H2O = a 2-hydroxy carboxylate + glutathione + H(+). It participates in secondary metabolite metabolism; methylglyoxal degradation; (R)-lactate from methylglyoxal: step 2/2. Functionally, thiolesterase that catalyzes the hydrolysis of S-D-lactoyl-glutathione to form glutathione and D-lactic acid. In Haemophilus influenzae (strain ATCC 51907 / DSM 11121 / KW20 / Rd), this protein is Hydroxyacylglutathione hydrolase.